The following is a 382-amino-acid chain: Opsin-VA (382 aa).

Topologically, residues 1-35 (MELFPVAVNGVSHAEDPFSGPLTFIAPWNYKVLAT) are extracellular. A helical transmembrane segment spans residues 36–56 (LMFVVTAASLSENFAVMLVTF). The Cytoplasmic portion of the chain corresponds to 57–67 (RFTQLRKPLNY). A helical transmembrane segment spans residues 68-88 (IIVNLSLADFLVSLTGGTISF). Residues 89-103 (LTNYHGYFFLGKWAC) are Extracellular-facing. Cys103 and Cys180 form a disulfide bridge. Residues 104–124 (VLEGFAVTYFGIVALWSLAVL) traverse the membrane as a helical segment. The Cytoplasmic segment spans residues 125–147 (AFERFFVICRPLGNIRLRGKHAA). A helical membrane pass occupies residues 148–168 (LGLLFVWTFSFIWTIPPVLGW). Over 169-193 (SSYTVSKIGTTCEPNWYSGNFHDHT) the chain is Extracellular. A helical transmembrane segment spans residues 194–214 (FIIAFFITCFILPLGVIVVCY). Topologically, residues 215–244 (CKLIKKLRKVSNTHGRLGNARKPERQVTRM) are cytoplasmic. The chain crosses the membrane as a helical span at residues 245-265 (VVVMIVAFMVAWTPYAAFSIV). Residues 266 to 279 (VTAHPSIHLDPRLA) are Extracellular-facing. Residues 280–300 (AAPAFFSKTAAVYNPVIYVFM) form a helical membrane-spanning segment. The residue at position 287 (Lys287) is an N6-(retinylidene)lysine. The Cytoplasmic portion of the chain corresponds to 301–382 (NKQFRKCLVQ…PIPENKVCPM (82 aa)). The segment covering 330 to 346 (RQGMTNESHTGEMSTIA) has biased composition (polar residues). Residues 330–371 (RQGMTNESHTGEMSTIASRIPKDGSIPEKTQEHPGERRSLAH) form a disordered region. Residues 349–368 (IPKDGSIPEKTQEHPGERRS) show a composition bias toward basic and acidic residues.

Belongs to the G-protein coupled receptor 1 family. Opsin subfamily. As to expression, expressed in a subset of retinal horizontal cells as well as in retinal ganglion cells.

The protein resides in the membrane. This is Opsin-VA from Rutilus rutilus (Roach).